We begin with the raw amino-acid sequence, 367 residues long: Protein-glutamate methylesterase/protein-glutamine glutaminase 1 (367 aa).

Positions 9–126 (KVLCVDDSAL…RDGMLDYSEK (118 aa)) constitute a Response regulatory domain. A 4-aspartylphosphate modification is found at Asp60. The 193-residue stretch at 168-360 (LVSTEKLIIV…RRIMARLASM (193 aa)) folds into the CheB-type methylesterase domain. Active-site residues include Ser180, His206, and Asp302.

This sequence belongs to the CheB family. In terms of processing, phosphorylated by CheA. Phosphorylation of the N-terminal regulatory domain activates the methylesterase activity.

It localises to the cytoplasm. The catalysed reaction is [protein]-L-glutamate 5-O-methyl ester + H2O = L-glutamyl-[protein] + methanol + H(+). It catalyses the reaction L-glutaminyl-[protein] + H2O = L-glutamyl-[protein] + NH4(+). Its function is as follows. Involved in chemotaxis. Part of a chemotaxis signal transduction system that modulates chemotaxis in response to various stimuli. Catalyzes the demethylation of specific methylglutamate residues introduced into the chemoreceptors (methyl-accepting chemotaxis proteins or MCP) by CheR. Also mediates the irreversible deamidation of specific glutamine residues to glutamic acid. This is Protein-glutamate methylesterase/protein-glutamine glutaminase 1 from Burkholderia pseudomallei (strain K96243).